The chain runs to 509 residues: Coiled-coil domain-containing protein 181 (509 aa).

Disordered regions lie at residues 27–122 (INDK…EDEE) and 287–368 (LAQV…NEKK). Composition is skewed to basic and acidic residues over residues 41 to 58 (ACKK…KETE) and 67 to 82 (DPDK…RRND). Residues 319–333 (RIQSAGVSPVTSTYC) are compositionally biased toward polar residues. Coiled coils occupy residues 335-377 (SPRQ…VFKA) and 418-488 (LKKK…RSKQ). Residues 337–368 (RQKELQKQLERKRERLKREEEQRKLEEENEKK) are compositionally biased toward basic and acidic residues.

This sequence belongs to the CCDC181 family. Homodimer. Interacts with HOOK1. Interacts with HOOK2. Interacts with HOOK3.

It localises to the cytoplasm. Its subcellular location is the cytoskeleton. The protein localises to the cell projection. The protein resides in the cilium. It is found in the flagellum. Its function is as follows. Microtubule-binding protein that localizes to the microtubular manchette of elongating spermatids. The protein is Coiled-coil domain-containing protein 181 of Rattus norvegicus (Rat).